The chain runs to 334 residues: Phenylalanine--tRNA ligase alpha subunit (334 aa).

Glu249 contacts Mg(2+).

The protein belongs to the class-II aminoacyl-tRNA synthetase family. Phe-tRNA synthetase alpha subunit type 1 subfamily. Tetramer of two alpha and two beta subunits. Mg(2+) is required as a cofactor.

The protein localises to the cytoplasm. The enzyme catalyses tRNA(Phe) + L-phenylalanine + ATP = L-phenylalanyl-tRNA(Phe) + AMP + diphosphate + H(+). This is Phenylalanine--tRNA ligase alpha subunit from Desulfatibacillum aliphaticivorans.